The following is a 76-amino-acid chain: Putative snRNP Sm-like protein (76 aa).

One can recognise a Sm domain in the interval 4–76; that stretch reads RPLDVIHRSL…VLAISPVDIE (73 aa).

The protein belongs to the snRNP Sm proteins family.

The chain is Putative snRNP Sm-like protein from Thermococcus gammatolerans (strain DSM 15229 / JCM 11827 / EJ3).